Reading from the N-terminus, the 217-residue chain is Growth hormone variant (217 aa).

An N-terminal signal peptide occupies residues 1-26 (MAAGSRTSLLLAFGLLCLPWLQEGSA). 2 disulfide bridges follow: Cys-79–Cys-191 and Cys-208–Cys-215. Ser-132 carries the phosphoserine modification. N-linked (GlcNAc...) asparagine glycosylation is present at Asn-166. Residue Ser-176 is modified to Phosphoserine.

It belongs to the somatotropin/prolactin family. As to expression, expressed in the placenta.

The protein resides in the secreted. Its function is as follows. Plays an important role in growth control. Its major role in stimulating body growth is to stimulate the liver and other tissues to secrete IGF1. It stimulates both the differentiation and proliferation of myoblasts. It also stimulates amino acid uptake and protein synthesis in muscle and other tissues. The chain is Growth hormone variant (GH2) from Pan troglodytes (Chimpanzee).